A 288-amino-acid polypeptide reads, in one-letter code: G1/S-specific cyclin-D2 (288 aa).

The Cyclin N-terminal domain occupies 26-151 (LQNLLTIEER…VLGKLKWNLA (126 aa)). The interval 264-288 (QHNGSKSVEDPDQATTPTDVRDVDL) is disordered. S270 carries the phosphoserine modification. The residue at position 279 (T279) is a Phosphothreonine.

It belongs to the cyclin family. Cyclin D subfamily. In terms of assembly, interacts with either CDK4 or CDK6 protein kinase to form a serine/threonine kinase holoenzyme complex. The cyclin subunit imparts substrate specificity to the complex. Phosphorylation at Thr-279 by MAP kinases is required for ubiquitination and degradation by the DCX(AMBRA1) complex. In terms of processing, ubiquitinated by the DCX(AMBRA1) complex during the transition from G1 to S cell phase, leading to its degradation: ubiquitination is dependent on Thr-279 phosphorylation. The DCX(AMBRA1) complex represents the major regulator of CCND2 stability during the G1/S transition. Polyubiquitinated by the SCF(FBXL2) complex, leading to proteasomal degradation.

The protein resides in the nucleus. It is found in the cytoplasm. It localises to the nucleus membrane. Its function is as follows. Regulatory component of the cyclin D2-CDK4 (DC) complex that phosphorylates and inhibits members of the retinoblastoma (RB) protein family including RB1 and regulates the cell-cycle during G(1)/S transition. Phosphorylation of RB1 allows dissociation of the transcription factor E2F from the RB/E2F complex and the subsequent transcription of E2F target genes which are responsible for the progression through the G(1) phase. Hypophosphorylates RB1 in early G(1) phase. Cyclin D-CDK4 complexes are major integrators of various mitogenenic and antimitogenic signals. The chain is G1/S-specific cyclin-D2 (Ccnd2) from Rattus norvegicus (Rat).